The chain runs to 493 residues: MFS-type transporter efuF (493 aa).

Transmembrane regions (helical) follow at residues 90-110, 117-137, 147-167, 179-199, 211-231, 279-299, 316-336, 343-363, 370-390, 406-426, and 435-455; these read ITLVLFYVTFCLLDVPANMLL, IMLPTLMMGWGSMTLIQCAVH, LLMGAFEAGFMAGVVYYLTTF, IFYGAATIAGAFSGLLAYGVF, FLMIIEGSATILLASFAYWHL, IALYAVIGISYGVASASVGNF, LYTVAPYCVGCVILLAQCTSS, STHLAGAMLLTFVGFILLITL, GPTYFACFLLAAGAFTPSCIF, AVTGFMVGASNSGGIISSLAF, and IPALIVTATFQGVGIVLVLGF.

Belongs to the major facilitator superfamily.

It localises to the membrane. Functionally, MFS-type transporter; part of the gene cluster that mediates the biosynthesis of enfumafungin, a glycosylated fernene-type triterpenoid with potent antifungal activity, mediated by its interaction with beta-1,3-glucan synthase and the fungal cell wall. Might facilitate the transport of glucose units to the subcellular site of enfumafungin biosynthesis. The polypeptide is MFS-type transporter efuF (Hormonema carpetanum).